The chain runs to 807 residues: Glycerol-3-phosphate acyltransferase (807 aa).

An HXXXXD motif motif is present at residues 308–313 (CHRSHM).

Belongs to the GPAT/DAPAT family.

It is found in the cell inner membrane. The catalysed reaction is sn-glycerol 3-phosphate + an acyl-CoA = a 1-acyl-sn-glycero-3-phosphate + CoA. It participates in phospholipid metabolism; CDP-diacylglycerol biosynthesis; CDP-diacylglycerol from sn-glycerol 3-phosphate: step 1/3. The sequence is that of Glycerol-3-phosphate acyltransferase from Shewanella baltica (strain OS155 / ATCC BAA-1091).